Reading from the N-terminus, the 238-residue chain is Histone H1 (238 aa).

2 stretches are compositionally biased toward low complexity: residues 21–34 and 123–132; these read AAVDTPAAKPAKAP and AKAPAAVKPK. Disordered regions lie at residues 21–57 and 123–238; these read AAVDTPAAKPAKAPKAAKAKKSTPGPKKPRVTPAHPS and AKAP…KAKK. An H15 domain is found at 54-124; sequence AHPSYAEMVS…KVKGSYKLAK (71 aa). Residues 133-197 are compositionally biased toward basic residues; it reads TATKKKPAAK…AAKPKAKAAA (65 aa). Low complexity-rich tracts occupy residues 198–208 and 217–230; these read KKAPAAATPKK and KRATPVKKAAPAKK.

The protein belongs to the histone H1/H5 family.

It localises to the nucleus. Its subcellular location is the chromosome. Functionally, histones H1 are necessary for the condensation of nucleosome chains into higher-order structures. The polypeptide is Histone H1 (Triticum aestivum (Wheat)).